A 248-amino-acid chain; its full sequence is tRNA (guanine-N(1)-)-methyltransferase (248 aa).

S-adenosyl-L-methionine contacts are provided by residues G113 and 133 to 138; that span reads IGDFVL.

The protein belongs to the RNA methyltransferase TrmD family. Homodimer.

It localises to the cytoplasm. The enzyme catalyses guanosine(37) in tRNA + S-adenosyl-L-methionine = N(1)-methylguanosine(37) in tRNA + S-adenosyl-L-homocysteine + H(+). Functionally, specifically methylates guanosine-37 in various tRNAs. The polypeptide is tRNA (guanine-N(1)-)-methyltransferase (Dehalococcoides mccartyi (strain ATCC BAA-2100 / JCM 16839 / KCTC 5957 / BAV1)).